We begin with the raw amino-acid sequence, 1009 residues long: Rho GTPase-activating protein gacT (1009 aa).

2 disordered regions span residues 1–72 (MKNI…SRNH) and 89–117 (TSHH…QQTQ). Basic and acidic residues predominate over residues 12-23 (FHKDKKEGDKQD). A compositionally biased stretch (low complexity) spans 26–35 (GSSGSSGNSG). Polar residues predominate over residues 58–69 (ESYSGDNSPTLS). Residues 89-103 (TSHHSHSHNHNHNHN) show a composition bias toward basic residues. The span at 104-117 (HQLTQPIQQQQQTQ) shows a compositional bias: low complexity. A Rho-GAP domain is found at 163–351 (VPLTQVPCRA…EVFPQHHLYY (189 aa)). Disordered regions lie at residues 388 to 420 (TISG…DSTA), 432 to 482 (PEQQ…TFRV), and 508 to 571 (GPSG…TTDQ). 3 stretches are compositionally biased toward low complexity: residues 394-415 (PSNG…ITSP), 432-468 (PEQQ…QPIS), and 512-521 (TTGTTPNGGS). Residues 522–546 (LSIGGGNGGNGGSSLSVGSGGGNGG) are compositionally biased toward gly residues. The span at 547–557 (SSLSVGSNTSV) shows a compositional bias: low complexity. Positions 580–656 (AYTNNEDTKA…IEREIEKKRL (77 aa)) form a coiled coil. Positions 686–713 (ISTIDGSGGSNRNSKNYGNGSSSSSNRR) are disordered. Positions 695 to 713 (SNRNSKNYGNGSSSSSNRR) are enriched in low complexity. A coiled-coil region spans residues 715-743 (SNTINQQLQMQLQQLQIQQQQYQQTQQSQ). A disordered region spans residues 759 to 781 (TTTTTTTSSGSNRFSSNRYKPVD). A compositionally biased stretch (polar residues) spans 766 to 781 (SSGSNRFSSNRYKPVD). The stretch at 839-952 (ENLVLLQQQY…IEEIHLLETY (114 aa)) forms a coiled coil. The interval 965 to 1009 (STTKDLLTRSRSPTLPSSINMSTSSLGSSSSSAYNNNNNNNNVPK) is disordered. Residues 967–980 (TKDLLTRSRSPTLP) are compositionally biased toward polar residues. Residues 981 to 1009 (SSINMSTSSLGSSSSSAYNNNNNNNNVPK) are compositionally biased toward low complexity.

The protein localises to the cytoplasm. Functionally, rho GTPase-activating protein involved in the signal transduction pathway. This chain is Rho GTPase-activating protein gacT (gacT), found in Dictyostelium discoideum (Social amoeba).